The following is a 58-amino-acid chain: MPSVKVRVGEPVDRALRILKKKIDKEGILKAAKSHRFYDKPSVKKRAKSKAAAKYRSR.

Residues 39 to 58 (DKPSVKKRAKSKAAAKYRSR) form a disordered region. Basic residues predominate over residues 43–58 (VKKRAKSKAAAKYRSR).

It belongs to the bacterial ribosomal protein bS21 family.

In Chlamydia pneumoniae (Chlamydophila pneumoniae), this protein is Small ribosomal subunit protein bS21 (rpsU).